Reading from the N-terminus, the 515-residue chain is Galactose/methyl galactoside import ATP-binding protein MglA (515 aa).

ABC transporter domains are found at residues 8 to 243 and 254 to 499; these read LEMR…VGRE and IPKE…AKYL. Position 40 to 47 (40 to 47) interacts with ATP; it reads GENGAGKS.

This sequence belongs to the ABC transporter superfamily. Galactose/methyl galactoside importer (TC 3.A.1.2.3) family. The complex is composed of one ATP-binding protein (MglA), two transmembrane proteins (MglC) and a solute-binding protein (MglB).

The protein resides in the cell membrane. The catalysed reaction is D-galactose(out) + ATP + H2O = D-galactose(in) + ADP + phosphate + H(+). It catalyses the reaction methyl beta-D-galactoside(out) + ATP + H2O = methyl beta-D-galactoside(in) + ADP + phosphate + H(+). Functionally, part of the ABC transporter complex MglABC involved in galactose/methyl galactoside import. Responsible for energy coupling to the transport system. In Clostridium perfringens (strain SM101 / Type A), this protein is Galactose/methyl galactoside import ATP-binding protein MglA.